The following is a 405-amino-acid chain: Acetate kinase (405 aa).

Position 7 (Asn-7) interacts with Mg(2+). ATP is bound at residue Lys-14. Arg-92 serves as a coordination point for substrate. Asp-149 (proton donor/acceptor) is an active-site residue. Residues 209 to 213 (HLGNG) and 284 to 286 (DMR) each bind ATP. Glu-389 contacts Mg(2+).

It belongs to the acetokinase family. Homodimer. It depends on Mg(2+) as a cofactor. Mn(2+) is required as a cofactor.

The protein resides in the cytoplasm. It carries out the reaction acetate + ATP = acetyl phosphate + ADP. It participates in metabolic intermediate biosynthesis; acetyl-CoA biosynthesis; acetyl-CoA from acetate: step 1/2. Functionally, catalyzes the formation of acetyl phosphate from acetate and ATP. Can also catalyze the reverse reaction. The protein is Acetate kinase of Borreliella burgdorferi (strain ZS7) (Borrelia burgdorferi).